The sequence spans 392 residues: Heat-inducible transcription repressor HrcA (392 aa).

The protein belongs to the HrcA family.

Its function is as follows. Negative regulator of class I heat shock genes (grpE-dnaK-dnaJ and groELS operons). Prevents heat-shock induction of these operons. The chain is Heat-inducible transcription repressor HrcA from Synechococcus sp. (strain JA-3-3Ab) (Cyanobacteria bacterium Yellowstone A-Prime).